We begin with the raw amino-acid sequence, 180 residues long: Signal peptidase complex subunit 3 (180 aa).

At 1–11 (MNTVLSRANSL) the chain is on the cytoplasmic side. The chain crosses the membrane as a helical; Signal-anchor for type II membrane protein span at residues 12–32 (FAFSLSVMAALTFGCFITTAF). Topologically, residues 33–180 (KERSVPVSIA…PDTYETTKSY (148 aa)) are lumenal. Residue Asn141 is glycosylated (N-linked (GlcNAc...) asparagine).

The protein belongs to the SPCS3 family. Component of the signal peptidase complex paralog A (SPC-A) composed of a catalytic subunit SEC11A and three accessory subunits SPCS1, SPCS2 and SPCS3. Component of the signal peptidase complex paralog C (SPC-C) composed of a catalytic subunit SEC11C and three accessory subunits SPCS1, SPCS2 and SPCS3. The complex induces a local thinning of the ER membrane which is used to measure the length of the signal peptide (SP) h-region of protein substrates. This ensures the selectivity of the complex towards h-regions shorter than 18-20 amino acids. Expressed in hen oviduct (at protein level).

The protein localises to the endoplasmic reticulum membrane. Functionally, essential component of the signal peptidase complex (SPC) which catalyzes the cleavage of N-terminal signal sequences from nascent proteins as they are translocated into the lumen of the endoplasmic reticulum. Essential for the SPC catalytic activity, possibly by stabilizing and positioning the active center of the complex close to the lumenal surface. The protein is Signal peptidase complex subunit 3 of Gallus gallus (Chicken).